The primary structure comprises 88 residues: Large ribosomal subunit protein bL27 (88 aa).

The segment covering 1–13 (MATKKGASSSSNG) has biased composition (polar residues). Positions 1-25 (MATKKGASSSSNGRDSEAKRLGVKR) are disordered.

It belongs to the bacterial ribosomal protein bL27 family.

The sequence is that of Large ribosomal subunit protein bL27 from Corynebacterium efficiens (strain DSM 44549 / YS-314 / AJ 12310 / JCM 11189 / NBRC 100395).